A 432-amino-acid chain; its full sequence is D-amino acid dehydrogenase (432 aa).

An FAD-binding site is contributed by 3-17 (VLVLGSGVIGTTTAY).

The protein belongs to the DadA oxidoreductase family. FAD is required as a cofactor.

It catalyses the reaction a D-alpha-amino acid + A + H2O = a 2-oxocarboxylate + AH2 + NH4(+). It functions in the pathway amino-acid degradation; D-alanine degradation; NH(3) and pyruvate from D-alanine: step 1/1. Its function is as follows. Oxidative deamination of D-amino acids. The sequence is that of D-amino acid dehydrogenase from Azotobacter vinelandii (strain DJ / ATCC BAA-1303).